We begin with the raw amino-acid sequence, 531 residues long: Doublesex- and mab-3-related transcription factor A2 (531 aa).

The segment at residues 69-116 (CARCRNHGVVSALKGHKRYCRWKDCLCAKCTLIAERQRVMAAQVALRR) is a DNA-binding region (DM). The tract at residues 197 to 312 (LQAGRPDSPQ…GGPGPRQRTP (116 aa)) is disordered. Low complexity predominate over residues 274-285 (PGSSSPLGSESG). A DMA domain is found at 310-345 (RTPLDILTRVFPGHRRGVLELVLQGCGGDVVQAIEQ).

The protein belongs to the DMRT family. As to expression, expressed in adult brain and testis, as well as in embryonic ovary, kidney, heart, lung, stomach and brain.

It is found in the nucleus. In terms of biological role, may be involved in sexual development. The chain is Doublesex- and mab-3-related transcription factor A2 (Dmrta2) from Mus musculus (Mouse).